Here is a 1750-residue protein sequence, read N- to C-terminus: Brefeldin A-inhibited guanine nucleotide-exchange protein 3 (1750 aa).

At Ala-2 the chain carries N-acetylalanine. 2 disordered regions span residues 44–65 (LRSP…IPGP) and 565–596 (EEGS…SSGN). Residues 47–61 (PENSSPVADSESGSS) are compositionally biased toward polar residues. Over residues 565 to 588 (EEGSHPVENGKGDGGHGGFERSDS) the composition is skewed to basic and acidic residues. Ser-586 is subject to Phosphoserine. Positions 601–788 (AIEQRRAYKL…RALYERISRN (188 aa)) constitute an SEC7 domain. The active site involves Glu-703. Ser-1307 carries the post-translational modification Phosphoserine.

Homodimer.

The protein resides in the cytoplasm. It is found in the cytosol. Its subcellular location is the membrane. With respect to regulation, inhibited by brefeldin A. Activates the ARF proteins by exchanging bound GDP for free GTP. Plays a role in vesicular protein sorting. Involved both in the nuclear division phase and in the nuclear fusion phase. This is Brefeldin A-inhibited guanine nucleotide-exchange protein 3 (BIG3) from Arabidopsis thaliana (Mouse-ear cress).